Consider the following 224-residue polypeptide: Urease accessory protein UreF (224 aa).

Belongs to the UreF family. UreD, UreF and UreG form a complex that acts as a GTP-hydrolysis-dependent molecular chaperone, activating the urease apoprotein by helping to assemble the nickel containing metallocenter of UreC. The UreE protein probably delivers the nickel.

Its subcellular location is the cytoplasm. Functionally, required for maturation of urease via the functional incorporation of the urease nickel metallocenter. The sequence is that of Urease accessory protein UreF from Ectopseudomonas mendocina (strain ymp) (Pseudomonas mendocina).